A 1381-amino-acid polypeptide reads, in one-letter code: MASPRASRWPPPLLLLLLPLLLLPPAAPGTRDPPPSPARRALSLAPLAGAGLELQLERRPEREPPPTPPRERRGPATPGPSYRAPEPGAATQRGPSGRAPRGGSADAAWKHWPESNTEAHVENITFYQNQEDFSTVSSKEGVMVQTSGKSHAASDAPENLTLLAETADARGRSGSSSRTNFTILPVGYSLEIATALTSQSGNLASESLHLPSSSSEFDERIAAFQTKSGTASEMGTERAMGLSEEWTVHSQEATTSAWSPSFLPALEMGELTTPSRKRNSSGPDLSWLHFYRTAASSPLLDLSSSSESTEKLNNSTGLQSSSVSQTKTMHVATVFTDGGPRTLRSLTVSLGPVSKTEGFPKDSRIATTSSSVLLSPSAVESRRNSRVTGNPGDEEFIEPSTENEFGLTSLRWQNDSPTFGEHQLASSSEVQNGSPMSQTETVSRSVAPMRGGEITAHWLLTNSTTSADVTGSSASYPEGVNASVLTQFSDSTVQSGGSHTALGDRSYSESSSTSSSESLNSSAPRGERSIAGISYGQVRGTAIEQRTSSDHTDHTYLSSTFTKGERALLSITDNSSSSDIVESSTSYIKISNSSHSEYSSFFHAQTERSNISSYDGEYAQPSTESPVLHTSNLPSYTPTINMPNTSVVLDTDAEFVSDSSSSSSSSSSSSSSGPPLPLPSVSQSHHLFSSILPSTRASVHLLKSTSDASTPWSSSPSPLPVSLTTSTSAPLSVSQTTLPQSSSTPVLPRARETPVTSFQTSTMTSFMTMLHSSQTADLKSQSTPHQEKVITESKSPSLVSLPTESTKAVTTNSPLPPSLTESSTEQTLPATSTNLAQMSPTFTTTILKTSQPLMTTPGTLSSTASLVTGPIAVQTTAGKQLSLTHPEILVPQISTEGGISTERNRVIVDATTGLIPLTSVPTSAKEMTTKLGVTAEYSPASRSLGTSPSPQTTVVSTAEDLAPKSATFAVQSSTQSPTTVSSSASVNSCAVNPCLHNGECVADNTSRGYHCRCPPSWQGDDCSVDVNECLSNPCPSTAMCNNTQGSFICKCPVGYQLEKGICNLVRTFVTEFKLKRTFLNTTVEKHSDLQEVENEITKTLNMCFSALPSYIRSTVHASRESNAVVISLQTTFSLASNVTLFDLADRMQKCVNSCKSSAEVCQLLGSQRRIFRAGSLCKRKSPECDKDTSICTDLDGVALCQCKSGYFQFNKMDHSCRACEDGYRLENETCMSCPFGLGGLNCGNPYQLITVVIAAAGGGLLLILGIALIVTCCRKNKNDISKLIFKSGDFQMSPYAEYPKNPRSQEWGREAIEMHENGSTKNLLQMTDVYYSPTSVRNPELERNGLYPAYTGLPGSRHSCIFPGQYNPSFISDESRRRDYF.

Positions 1–29 (MASPRASRWPPPLLLLLLPLLLLPPAAPG) are cleaved as a signal peptide. The segment at 24 to 108 (PPAAPGTRDP…APRGGSADAA (85 aa)) is disordered. Over residues 25 to 37 (PAAPGTRDPPPSP) the composition is skewed to pro residues. Topologically, residues 30–1248 (TRDPPPSPAR…GLNCGNPYQL (1219 aa)) are extracellular. The segment covering 38 to 52 (ARRALSLAPLAGAGL) has biased composition (low complexity). Residues 55 to 74 (QLERRPEREPPPTPPRERRG) show a composition bias toward basic and acidic residues. O-linked (GalNAc...) threonine glycosylation occurs at Thr67. Residues 93–105 (RGPSGRAPRGGSA) show a composition bias toward low complexity. Asn123, Asn159, Asn180, and Asn314 each carry an N-linked (GlcNAc...) asparagine glycan. Over residues 301–316 (DLSSSSESTEKLNNST) the composition is skewed to low complexity. Disordered stretches follow at residues 301-325 (DLSSSSESTEKLNNSTGLQSSSVSQ) and 376-447 (PSAV…RSVA). The segment covering 424–444 (LASSSEVQNGSPMSQTETVSR) has biased composition (polar residues). Residues Asn462, Asn520, and Asn610 are each glycosylated (N-linked (GlcNAc...) asparagine). The disordered stretch occupies residues 491-529 (STVQSGGSHTALGDRSYSESSSTSSSESLNSSAPRGERS). Residues 508–522 (SESSSTSSSESLNSS) are compositionally biased toward low complexity. Disordered regions lie at residues 612-680 (SSYD…PLPS), 706-757 (SDAS…PVTS), and 774-830 (QTAD…TLPA). Positions 620–648 (QPSTESPVLHTSNLPSYTPTINMPNTSVV) are enriched in polar residues. Low complexity-rich tracts occupy residues 657–680 (SDSSSSSSSSSSSSSSGPPLPLPS) and 706–748 (SDAS…PVLP). 2 stretches are compositionally biased toward polar residues: residues 774–784 (QTADLKSQSTP) and 792–809 (ESKSPSLVSLPTESTKAV). Low complexity predominate over residues 810-825 (TTNSPLPPSLTESSTE). The EGF-like 1 domain maps to 985 to 1023 (SVNSCAVNPCLHNGECVADNTSRGYHCRCPPSWQGDDCS). Disulfide bonds link Cys989–Cys1000, Cys994–Cys1011, Cys1013–Cys1022, Cys1029–Cys1040, Cys1034–Cys1049, and Cys1051–Cys1062. The 39-residue stretch at 1025–1063 (DVNECLSNPCPSTAMCNNTQGSFICKCPVGYQLEKGICN) folds into the EGF-like 2; calcium-binding domain. N-linked (GlcNAc...) asparagine glycosylation occurs at Asn1137. Residues 1249–1269 (ITVVIAAAGGGLLLILGIALI) form a helical membrane-spanning segment. Residues 1270-1381 (VTCCRKNKND…SDESRRRDYF (112 aa)) lie on the Cytoplasmic side of the membrane. Ser1359 is subject to Phosphoserine.

In terms of assembly, interacts with CCM2 and KRIT1; KRIT1 markedly facilitates interaction with CCM2.

The protein resides in the cell membrane. The protein localises to the cell junction. It is found in the secreted. Its function is as follows. Receptor component of the CCM signaling pathway which is a crucial regulator of heart and vessel formation and integrity. May act through the stabilization of endothelial cell junctions. This Homo sapiens (Human) protein is Protein HEG homolog 1 (HEG1).